Reading from the N-terminus, the 434-residue chain is Enolase 2 (434 aa).

A (2R)-2-phosphoglycerate-binding site is contributed by Q171. E213 acts as the Proton donor in catalysis. Mg(2+)-binding residues include D250, E293, and D320. K345, R374, S375, and K396 together coordinate (2R)-2-phosphoglycerate. K345 functions as the Proton acceptor in the catalytic mechanism.

This sequence belongs to the enolase family. Mg(2+) is required as a cofactor.

The protein resides in the cytoplasm. The protein localises to the secreted. Its subcellular location is the cell surface. It catalyses the reaction (2R)-2-phosphoglycerate = phosphoenolpyruvate + H2O. It functions in the pathway carbohydrate degradation; glycolysis; pyruvate from D-glyceraldehyde 3-phosphate: step 4/5. Catalyzes the reversible conversion of 2-phosphoglycerate (2-PG) into phosphoenolpyruvate (PEP). It is essential for the degradation of carbohydrates via glycolysis. The protein is Enolase 2 of Streptomyces coelicolor (strain ATCC BAA-471 / A3(2) / M145).